We begin with the raw amino-acid sequence, 524 residues long: Ribonuclease Y (524 aa).

A helical membrane pass occupies residues 3 to 23 (IVINLFLLVPASIVFFAAGFF). Residues 96–127 (QQREGQLKKQAQDNRDMERRLQDQRKENEQVQ) form a disordered region. The span at 100-124 (GQLKKQAQDNRDMERRLQDQRKENE) shows a compositional bias: basic and acidic residues. A KH domain is found at 214 to 280 (ALSVVHIQTD…KLTLQKLLSE (67 aa)). In terms of domain architecture, HD spans 340–432 (LLQHSREVAM…VDAANVISLS (93 aa)).

Belongs to the RNase Y family.

Its subcellular location is the cell membrane. In terms of biological role, endoribonuclease that initiates mRNA decay. The sequence is that of Ribonuclease Y from Chlorobium phaeovibrioides (strain DSM 265 / 1930) (Prosthecochloris vibrioformis (strain DSM 265)).